Here is a 182-residue protein sequence, read N- to C-terminus: Putative pre-16S rRNA nuclease (182 aa).

This sequence belongs to the YqgF nuclease family.

Its subcellular location is the cytoplasm. Functionally, could be a nuclease involved in processing of the 5'-end of pre-16S rRNA. The protein is Putative pre-16S rRNA nuclease of Corynebacterium aurimucosum (strain ATCC 700975 / DSM 44827 / CIP 107346 / CN-1) (Corynebacterium nigricans).